The sequence spans 499 residues: C2H2-type transcription factor RPN4 (499 aa).

Residues 329–397 (QTTKKDNSKP…TTKSTHTHSK (69 aa)) are disordered. A compositionally biased stretch (basic and acidic residues) spans 331–344 (TKKDNSKPVEKTVV). Residues 345–363 (EKTSSVTKAGSNHSRSTLA) are compositionally biased toward polar residues. The C2H2-type zinc finger occupies 405–436 (FVCELVNSVTNEVCGAQFSRTYDLTRHQNTIH).

The protein localises to the nucleus. Its function is as follows. Transcription factor that acts as a transcriptional activator of a number of genes encoding proteasomal subunits. Plays a role in ergosterol and plasma membrane homeostasis, and subsequent azole resistance. Regulates the expression of 212 genes, activating 80 genes and repressing, likely in an indirect fashion, 132 genes. Targets comprise several proteasome and ergosterol biosynthesis genes, including ERG1, ERG2, ERG3, and ERG11. Directly regulates ERG11 expression through the 3'-TTGCAAA-5' binding motif. This chain is C2H2-type transcription factor RPN4, found in Candida glabrata (strain ATCC 2001 / BCRC 20586 / JCM 3761 / NBRC 0622 / NRRL Y-65 / CBS 138) (Yeast).